Consider the following 151-residue polypeptide: Regulatory protein RecX (151 aa).

It belongs to the RecX family.

It is found in the cytoplasm. Modulates RecA activity. This chain is Regulatory protein RecX, found in Actinobacillus pleuropneumoniae serotype 5b (strain L20).